Reading from the N-terminus, the 249-residue chain is Triosephosphate isomerase (249 aa).

9–11 contacts substrate; sequence NWK. His95 serves as the catalytic Electrophile. Glu165 acts as the Proton acceptor in catalysis. Substrate is bound by residues Gly171, Ser210, and 231-232; that span reads GG.

Belongs to the triosephosphate isomerase family. As to quaternary structure, homodimer.

The protein localises to the cytoplasm. It catalyses the reaction D-glyceraldehyde 3-phosphate = dihydroxyacetone phosphate. It participates in carbohydrate biosynthesis; gluconeogenesis. The protein operates within carbohydrate degradation; glycolysis; D-glyceraldehyde 3-phosphate from glycerone phosphate: step 1/1. Its function is as follows. Involved in the gluconeogenesis. Catalyzes stereospecifically the conversion of dihydroxyacetone phosphate (DHAP) to D-glyceraldehyde-3-phosphate (G3P). This Hyphomonas neptunium (strain ATCC 15444) protein is Triosephosphate isomerase.